A 69-amino-acid polypeptide reads, in one-letter code: Protein translocase subunit SecE (69 aa).

Residues 43-63 (GLGICLLGFVGFVIHVPITYL) traverse the membrane as a helical segment.

This sequence belongs to the SecE/SEC61-gamma family. As to quaternary structure, component of the Sec protein translocase complex. Heterotrimer consisting of SecY (alpha), SecG (beta) and SecE (gamma) subunits. The heterotrimers can form oligomers, although 1 heterotrimer is thought to be able to translocate proteins. Interacts with the ribosome. May interact with SecDF, and other proteins may be involved.

It is found in the cell membrane. Essential subunit of the Sec protein translocation channel SecYEG. Clamps together the 2 halves of SecY. May contact the channel plug during translocation. This is Protein translocase subunit SecE from Methanococcus maripaludis (strain DSM 14266 / JCM 13030 / NBRC 101832 / S2 / LL).